Here is a 304-residue protein sequence, read N- to C-terminus: Serine/threonine-protein phosphatase PP1 isozyme 3 (304 aa).

Mn(2+) contacts are provided by aspartate 61, histidine 63, aspartate 89, and asparagine 121. The Proton donor role is filled by histidine 122. Mn(2+) contacts are provided by histidine 170 and histidine 245.

Belongs to the PPP phosphatase family. PP-1 subfamily. It depends on Mn(2+) as a cofactor.

The enzyme catalyses O-phospho-L-seryl-[protein] + H2O = L-seryl-[protein] + phosphate. It carries out the reaction O-phospho-L-threonyl-[protein] + H2O = L-threonyl-[protein] + phosphate. The chain is Serine/threonine-protein phosphatase PP1 isozyme 3 (NPP3) from Nicotiana tabacum (Common tobacco).